A 291-amino-acid polypeptide reads, in one-letter code: Tyrosine-protein kinase PtkA (291 aa).

The disordered stretch occupies residues 1-79; the sequence is MSSPRERRPA…RRASSPGESP (79 aa). Positions 23–60 are enriched in polar residues; it reads HQTSRSSPDTTAPTGSGLSNRFVNDNGIVTDTTASGTN. Residue Tyr-262 is modified to Phosphotyrosine.

It belongs to the HAD-like hydrolase superfamily. CbbY/CbbZ/Gph/YieH family. In terms of assembly, interacts with PtpA. Autophosphorylated.

It carries out the reaction L-tyrosyl-[protein] + ATP = O-phospho-L-tyrosyl-[protein] + ADP + H(+). In terms of biological role, required for growth within macrophages. Catalyzes the phosphorylation of PtpA on the tyrosine residues at positions 128 and 129, thereby increasing PtpA phosphatase activity and promoting pathogenicity. The polypeptide is Tyrosine-protein kinase PtkA (Mycobacterium bovis (strain ATCC BAA-935 / AF2122/97)).